A 95-amino-acid chain; its full sequence is Co-chaperonin GroES (95 aa).

This sequence belongs to the GroES chaperonin family. As to quaternary structure, heptamer of 7 subunits arranged in a ring. Interacts with the chaperonin GroEL.

The protein localises to the cytoplasm. Together with the chaperonin GroEL, plays an essential role in assisting protein folding. The GroEL-GroES system forms a nano-cage that allows encapsulation of the non-native substrate proteins and provides a physical environment optimized to promote and accelerate protein folding. GroES binds to the apical surface of the GroEL ring, thereby capping the opening of the GroEL channel. This Rhizorhabdus wittichii (strain DSM 6014 / CCUG 31198 / JCM 15750 / NBRC 105917 / EY 4224 / RW1) (Sphingomonas wittichii) protein is Co-chaperonin GroES.